Reading from the N-terminus, the 165-residue chain is Ribosomal RNA large subunit methyltransferase H (165 aa).

G109 provides a ligand contact to S-adenosyl-L-methionine.

Belongs to the RNA methyltransferase RlmH family. Homodimer.

The protein localises to the cytoplasm. The catalysed reaction is pseudouridine(1915) in 23S rRNA + S-adenosyl-L-methionine = N(3)-methylpseudouridine(1915) in 23S rRNA + S-adenosyl-L-homocysteine + H(+). Functionally, specifically methylates the pseudouridine at position 1915 (m3Psi1915) in 23S rRNA. This is Ribosomal RNA large subunit methyltransferase H from Methylorubrum populi (strain ATCC BAA-705 / NCIMB 13946 / BJ001) (Methylobacterium populi).